The following is a 352-amino-acid chain: Divinyl chlorophyll a/b light-harvesting protein PcbB (352 aa).

The next 6 helical transmembrane spans lie at 27 to 47 (FIAA…AFTL), 89 to 109 (CTVI…GGIL), 142 to 162 (FILG…VEWA), 203 to 223 (VMGG…FHII), 243 to 263 (AVLS…AFWS), and 307 to 327 (LANV…WHAL).

This sequence belongs to the PsbB/PsbC family. IsiA/Pcb subfamily. The antenna complex consists of divinyl chlorophylls (a and b) and divinyl chlorophyll a/b binding proteins and binds more divinyl chlorophyll b than does the antenna complex from high-light-adapted Prochlorococcus. Divinyl chlorophyll a serves as cofactor. It depends on divinyl chlorophyll b as a cofactor.

It localises to the cellular thylakoid membrane. The antenna complex functions as a light receptor, it captures and delivers excitation energy to photosystems II and I. The Prochlorales pcb genes are not related to higher plant LHCs. The chain is Divinyl chlorophyll a/b light-harvesting protein PcbB (pcbB) from Prochlorococcus marinus (strain NATL2A).